We begin with the raw amino-acid sequence, 497 residues long: Ankyrin repeat domain-containing protein 53 (497 aa).

Residues 1–10 (MRRPSRRRSK) are compositionally biased toward basic residues. Residues 1–65 (MRRPSRRRSK…VSSPNSESSQ (65 aa)) form a disordered region. Residues 12 to 27 (STPPRSHTTPRRTGPS) are compositionally biased toward low complexity. Residues 28 to 39 (DSRRRPGTKEQP) are compositionally biased toward basic and acidic residues. ANK repeat units follow at residues 110 to 140 (KGFTAIHFAAQKCQLSCLKVLIEEYKYPVDL), 144 to 177 (KGQTPLHLVIHKNNKSDILPCIDYLLKKGAAINS), and 181 to 210 (NGSTPLHLASCNGLLGCIKLLVQSGANVHA). Positions 239–264 (WKHDKKVLAQEMEKLRTLKEKLTILE) form a coiled coil.

As to quaternary structure, interacts with PSRC1; recruited by PSRC1 to the spindle during mitosis. In terms of processing, phosphorylated during mitosis.

The protein localises to the cytoplasm. It is found in the cytoskeleton. Its subcellular location is the spindle. The protein resides in the spindle pole. Functionally, required for normal progression through mitosis. Involved in chromosome alignment and cytokinesis via regulation of microtubules polymerization. This chain is Ankyrin repeat domain-containing protein 53 (Ankrd53), found in Mus musculus (Mouse).